Reading from the N-terminus, the 629-residue chain is tRNA uridine 5-carboxymethylaminomethyl modification enzyme MnmG (629 aa).

Residues 15–20 (GAGHAG), Val-127, and Ser-182 each bind FAD. Residues 203-227 (TPPRVKSSTIDYSKTEEQPGDDHPR) form a disordered region. Residues 215–227 (SKTEEQPGDDHPR) show a composition bias toward basic and acidic residues. An NAD(+)-binding site is contributed by 274–288 (GARYCPSIEDKIVRF). Gln-371 contacts FAD.

It belongs to the MnmG family. Homodimer. Heterotetramer of two MnmE and two MnmG subunits. It depends on FAD as a cofactor.

The protein resides in the cytoplasm. Functionally, NAD-binding protein involved in the addition of a carboxymethylaminomethyl (cmnm) group at the wobble position (U34) of certain tRNAs, forming tRNA-cmnm(5)s(2)U34. The chain is tRNA uridine 5-carboxymethylaminomethyl modification enzyme MnmG from Listeria welshimeri serovar 6b (strain ATCC 35897 / DSM 20650 / CCUG 15529 / CIP 8149 / NCTC 11857 / SLCC 5334 / V8).